Here is a 67-residue protein sequence, read N- to C-terminus: Large ribosomal subunit protein uL29 (67 aa).

Belongs to the universal ribosomal protein uL29 family.

In Sphingopyxis alaskensis (strain DSM 13593 / LMG 18877 / RB2256) (Sphingomonas alaskensis), this protein is Large ribosomal subunit protein uL29.